The primary structure comprises 360 residues: Photosystem II protein D1 (360 aa).

3 consecutive transmembrane segments (helical) span residues 29–46 (YIGWFGVLMIPTLLTATS), 118–133 (HFLTGVACYIGREWEL), and 142–156 (WISVAFTAPVAAAAA). H118 lines the chlorophyll a pocket. Pheophytin a is bound at residue Y126. [CaMn4O5] cluster-binding residues include D170 and E189. Residues 197–218 (FHQLGVAGVFGGSLFSAMHGSL) traverse the membrane as a helical segment. H198 is a binding site for chlorophyll a. A quinone-binding positions include H215 and 264–265 (SF). Residue H215 participates in Fe cation binding. H272 lines the Fe cation pocket. Residues 274–288 (FLGLWPVVGIWLTAL) traverse the membrane as a helical segment. Residues H332, E333, D342, and A344 each contribute to the [CaMn4O5] cluster site. A propeptide spanning residues 345-360 (SGESLPVALTAPAVNG) is cleaved from the precursor.

The protein belongs to the reaction center PufL/M/PsbA/D family. As to quaternary structure, PSII is composed of 1 copy each of membrane proteins PsbA, PsbB, PsbC, PsbD, PsbE, PsbF, PsbH, PsbI, PsbJ, PsbK, PsbL, PsbM, PsbT, PsbX, PsbY, PsbZ, Psb30/Ycf12, at least 3 peripheral proteins of the oxygen-evolving complex and a large number of cofactors. It forms dimeric complexes. The cofactor is The D1/D2 heterodimer binds P680, chlorophylls that are the primary electron donor of PSII, and subsequent electron acceptors. It shares a non-heme iron and each subunit binds pheophytin, quinone, additional chlorophylls, carotenoids and lipids. D1 provides most of the ligands for the Mn4-Ca-O5 cluster of the oxygen-evolving complex (OEC). There is also a Cl(-1) ion associated with D1 and D2, which is required for oxygen evolution. The PSII complex binds additional chlorophylls, carotenoids and specific lipids.. Tyr-161 forms a radical intermediate that is referred to as redox-active TyrZ, YZ or Y-Z. In terms of processing, C-terminally processed by CTPA; processing is essential to allow assembly of the oxygen-evolving complex and thus photosynthetic growth.

Its subcellular location is the plastid. It localises to the chloroplast thylakoid membrane. The catalysed reaction is 2 a plastoquinone + 4 hnu + 2 H2O = 2 a plastoquinol + O2. Functionally, photosystem II (PSII) is a light-driven water:plastoquinone oxidoreductase that uses light energy to abstract electrons from H(2)O, generating O(2) and a proton gradient subsequently used for ATP formation. It consists of a core antenna complex that captures photons, and an electron transfer chain that converts photonic excitation into a charge separation. The D1/D2 (PsbA/PsbD) reaction center heterodimer binds P680, the primary electron donor of PSII as well as several subsequent electron acceptors. In Porphyra purpurea (Red seaweed), this protein is Photosystem II protein D1.